We begin with the raw amino-acid sequence, 1061 residues long: Bifunctional cytochrome P450/NADPH--P450 reductase 1 (1061 aa).

Residues 1–475 (MKETSPIPQP…AEKAAPDEQK (475 aa)) form a cytochrome P450 region. Position 403 (Cys403) interacts with heme. Positions 476–1061 (EKTEAKGASV…MYAKDVWAGI (586 aa)) are NADPH--P450 reductase. Residues 493–632 (LLVLYGSDTG…QLDEWKKSMW (140 aa)) form the Flavodoxin-like domain. FMN is bound by residues 499–504 (SDTGTA), 546–549 (SYNG), 580–582 (CGD), and 588–590 (TYQ). The FAD-binding FR-type domain occupies 671 to 904 (YEASHASIAE…RTPESRFQLP (234 aa)).

In the N-terminal section; belongs to the cytochrome P450 family. The cofactor is FAD. FMN is required as a cofactor. Heme b serves as cofactor.

The protein localises to the cytoplasm. The enzyme catalyses an organic molecule + reduced [NADPH--hemoprotein reductase] + O2 = an alcohol + oxidized [NADPH--hemoprotein reductase] + H2O + H(+). The catalysed reaction is 2 oxidized [cytochrome P450] + NADPH = 2 reduced [cytochrome P450] + NADP(+) + H(+). Its function is as follows. Functions as a fatty acid monooxygenase. Catalyzes hydroxylation of a range of long-chain fatty acids, with a preference for long-chain unsaturated and branched-chain fatty acids over saturated fatty acids. Hydroxylation of myristic acid occurs mainly at the omega-2 position. Also displays a NADPH-dependent reductase activity in the C-terminal domain, which allows electron transfer from NADPH to the heme iron of the cytochrome P450 N-terminal domain. Is also able to catalyze efficient oxidation of sodium dodecyl sulfate (SDS). In Bacillus subtilis (strain 168), this protein is Bifunctional cytochrome P450/NADPH--P450 reductase 1.